The sequence spans 581 residues: MSENVISSSKNVVSKLLYVKDEYWPSVAPAATELISKLINAFWCQTLNGQLVEEDEGERNCIFLFDRCLKTEGCLKKIGPVTVMQFLACFLLSSQNHAYAWSVCRQIPSDDMAFKFTKCFQNSQQFRDANFCKLVLVWTVCQCVSSTVYYPAILDLLPVLSDLVKEMEKDPASLQAKENEFWLKKLIQTSLHHSSDNSLVFYLEMLLDSLDLRNCIYVVFEDEALFRRLKDIGNPEIRMMLDSGLRDWRKQRSGRSSSHVASKGINKVVNINPGDVKSLIELFPQLSVEEAVEHLSASLGNIDAACESVITSSLPEELDSSTHSPIYTKPNVDSMHKQPKKAIAPLSLSSSVTAVISNRTSDKKTRSTVAEEDDITHLNISPDRLYLNKKPEDLNFWKKSVPETDKSRVLNLLAMAEDDEYDDTYDDLDTTGPVDSGVGDDDPEASSKDAHDFQKFINQTLYDFYQQNPEVFDQKARKSKERADLLAKLDNSLTHEQIEGWRRMFTTDSKFAEAVKKEVTFGSGNTNIGSLRQTKFKQSNYTPPELNDGSRQHRPSRPSKNPSLKKKKYVRTKPKKASNEK.

The region spanning 271–314 (INPGDVKSLIELFPQLSVEEAVEHLSASLGNIDAACESVITSSL) is the CUE domain. Residue Tyr386 is modified to Phosphotyrosine. Disordered stretches follow at residues 422-448 (DDTY…ASSK) and 522-581 (GSGN…SNEK). A compositionally biased stretch (polar residues) spans 522–542 (GSGNTNIGSLRQTKFKQSNYT). Residues 552–581 (QHRPSRPSKNPSLKKKKYVRTKPKKASNEK) are compositionally biased toward basic residues.

As to quaternary structure, component of the RQT (ribosome quality control trigger) complex.

It localises to the cytoplasm. It is found in the nucleus. Functionally, involved in activation of the ribosome quality control (RQC) pathway, a pathway that degrades nascent peptide chains during problematic translation. Specifically recognizes and binds RPS20/uS10 ubiquitinated by HEL2, promoting recruitment of the RQT (ribosome quality control trigger) complex on stalled ribosomes, followed by disassembly of stalled ribosomes. The protein is CUE domain-containing protein 3 of Schizosaccharomyces pombe (strain 972 / ATCC 24843) (Fission yeast).